The following is a 450-amino-acid chain: Tubulin alpha chain (450 aa).

Residue Gln11 coordinates GTP. Lys40 is modified (N6-acetyllysine). GTP is bound by residues Glu71, Ser140, Gly144, Thr145, Thr179, Asn206, and Asn228. A Mg(2+)-binding site is contributed by Glu71. The active site involves Glu254.

This sequence belongs to the tubulin family. In terms of assembly, dimer of alpha and beta chains. A typical microtubule is a hollow water-filled tube with an outer diameter of 25 nm and an inner diameter of 15 nM. Alpha-beta heterodimers associate head-to-tail to form protofilaments running lengthwise along the microtubule wall with the beta-tubulin subunit facing the microtubule plus end conferring a structural polarity. Microtubules usually have 13 protofilaments but different protofilament numbers can be found in some organisms and specialized cells. The cofactor is Mg(2+). Acetylation of alpha chains at Lys-40 stabilizes microtubules and affects affinity and processivity of microtubule motors. This modification has a role in multiple cellular functions, ranging from cell motility, cell cycle progression or cell differentiation to intracellular trafficking and signaling.

Its subcellular location is the cytoplasm. The protein localises to the cytoskeleton. It carries out the reaction GTP + H2O = GDP + phosphate + H(+). Its function is as follows. Tubulin is the major constituent of microtubules, a cylinder consisting of laterally associated linear protofilaments composed of alpha- and beta-tubulin heterodimers. Microtubules grow by the addition of GTP-tubulin dimers to the microtubule end, where a stabilizing cap forms. Below the cap, tubulin dimers are in GDP-bound state, owing to GTPase activity of alpha-tubulin. The chain is Tubulin alpha chain from Euplotes vannus (Marine ciliate).